We begin with the raw amino-acid sequence, 489 residues long: Male-specific lethal 1-like 1 (489 aa).

Disordered stretches follow at residues 126 to 164 (PMVSNDNNQQREGEQVGAMVGDSSPEDSPSGKHWNVRKG) and 224 to 311 (VKKD…EDMQ). The stretch at 179–227 (LLLQLELIEQQQKHLHNKNKEIEDLKAEKEMLMARIERMEHRLQMVKKD) forms a coiled coil. Residues 347–466 (TVEVPSWRES…LKQQDFDLPW (120 aa)) enclose the PEHE domain. Residues 371–389 (ECLDDSVFLKRHSKLELDE) are interaction with KAT8 HAT domain. Residues 380-394 (KRHSKLELDEKRRKR) carry the Bipartite nuclear localization signal motif.

It belongs to the msl-1 family. In terms of assembly, component of a multisubunit histone acetyltransferase complex (MSL). Interacts (via PEHE domain) with KAT8 (via HAT domain) and MSL3 (via MRG domain); both interactions are direct.

It localises to the nucleus. It is found in the nucleoplasm. Its subcellular location is the nucleus speckle. Component of histone acetyltransferase complex. Within MSL complex, promotes ubiquitination of histone H2B. This is Male-specific lethal 1-like 1 (msl1l1) from Danio rerio (Zebrafish).